A 241-amino-acid chain; its full sequence is UDP-2,3-diacylglucosamine hydrolase (241 aa).

Mn(2+) contacts are provided by Asp-8, His-10, Asp-41, Asn-78, and His-113. Position 78 to 79 (78 to 79) interacts with substrate; that stretch reads NR. Positions 121, 159, 163, 166, and 194 each coordinate substrate. The Mn(2+) site is built by His-194 and His-196.

Belongs to the LpxH family. Mn(2+) is required as a cofactor.

Its subcellular location is the cell inner membrane. It carries out the reaction UDP-2-N,3-O-bis[(3R)-3-hydroxytetradecanoyl]-alpha-D-glucosamine + H2O = 2-N,3-O-bis[(3R)-3-hydroxytetradecanoyl]-alpha-D-glucosaminyl 1-phosphate + UMP + 2 H(+). The protein operates within glycolipid biosynthesis; lipid IV(A) biosynthesis; lipid IV(A) from (3R)-3-hydroxytetradecanoyl-[acyl-carrier-protein] and UDP-N-acetyl-alpha-D-glucosamine: step 4/6. Functionally, hydrolyzes the pyrophosphate bond of UDP-2,3-diacylglucosamine to yield 2,3-diacylglucosamine 1-phosphate (lipid X) and UMP by catalyzing the attack of water at the alpha-P atom. Involved in the biosynthesis of lipid A, a phosphorylated glycolipid that anchors the lipopolysaccharide to the outer membrane of the cell. This Shewanella putrefaciens (strain CN-32 / ATCC BAA-453) protein is UDP-2,3-diacylglucosamine hydrolase.